The following is a 371-amino-acid chain: MKDDATGADFLLSGYDYELPEDRIAQHPPVERGLSRLLVLDRTTGERIHARFADLAEHLPEGALLVANNSKVLPARLLGHRPTGGKVEFLLLTPLPLVTPLAAGPASGTVEPGWCVAEVEGLLRASKPLRPGDTLSFGDDLRVEVVHKGEFGRSMVLLFWRGELATLFAREGHLPLPPYIRRADGDEDRDRYQTVFAREDRLGSVAAPTAGLHFTPSLRETLTARGHQWAEVTLYVGYGTFSPVRCADIRDHAMHREYVEVTAETVEAIRRAKADGRPVVAVGTTSCRVLEGVATAKGTLEPYAGWTDIFMYPGYTFKVVDHLITNFHLPESSLLMLVSAFAGRERVLATYREAIEEGYRFFSYGDAMLLR.

Belongs to the QueA family. In terms of assembly, monomer.

The protein resides in the cytoplasm. It catalyses the reaction 7-aminomethyl-7-carbaguanosine(34) in tRNA + S-adenosyl-L-methionine = epoxyqueuosine(34) in tRNA + adenine + L-methionine + 2 H(+). It functions in the pathway tRNA modification; tRNA-queuosine biosynthesis. Transfers and isomerizes the ribose moiety from AdoMet to the 7-aminomethyl group of 7-deazaguanine (preQ1-tRNA) to give epoxyqueuosine (oQ-tRNA). This Nitratidesulfovibrio vulgaris (strain DP4) (Desulfovibrio vulgaris) protein is S-adenosylmethionine:tRNA ribosyltransferase-isomerase.